We begin with the raw amino-acid sequence, 196 residues long: Imidazole glycerol phosphate synthase subunit HisH (196 aa).

The region spanning Lys-2–Met-196 is the Glutamine amidotransferase type-1 domain. Residue Cys-77 is the Nucleophile of the active site. Active-site residues include His-178 and Glu-180.

Heterodimer of HisH and HisF.

Its subcellular location is the cytoplasm. It catalyses the reaction 5-[(5-phospho-1-deoxy-D-ribulos-1-ylimino)methylamino]-1-(5-phospho-beta-D-ribosyl)imidazole-4-carboxamide + L-glutamine = D-erythro-1-(imidazol-4-yl)glycerol 3-phosphate + 5-amino-1-(5-phospho-beta-D-ribosyl)imidazole-4-carboxamide + L-glutamate + H(+). The enzyme catalyses L-glutamine + H2O = L-glutamate + NH4(+). Its pathway is amino-acid biosynthesis; L-histidine biosynthesis; L-histidine from 5-phospho-alpha-D-ribose 1-diphosphate: step 5/9. IGPS catalyzes the conversion of PRFAR and glutamine to IGP, AICAR and glutamate. The HisH subunit catalyzes the hydrolysis of glutamine to glutamate and ammonia as part of the synthesis of IGP and AICAR. The resulting ammonia molecule is channeled to the active site of HisF. The polypeptide is Imidazole glycerol phosphate synthase subunit HisH (Pectobacterium atrosepticum (strain SCRI 1043 / ATCC BAA-672) (Erwinia carotovora subsp. atroseptica)).